The following is a 394-amino-acid chain: NAD(P)H-quinone oxidoreductase subunit H (394 aa).

It belongs to the complex I 49 kDa subunit family. NDH-1 can be composed of about 15 different subunits; different subcomplexes with different compositions have been identified which probably have different functions.

The protein resides in the cellular thylakoid membrane. The catalysed reaction is a plastoquinone + NADH + (n+1) H(+)(in) = a plastoquinol + NAD(+) + n H(+)(out). It carries out the reaction a plastoquinone + NADPH + (n+1) H(+)(in) = a plastoquinol + NADP(+) + n H(+)(out). Its function is as follows. NDH-1 shuttles electrons from an unknown electron donor, via FMN and iron-sulfur (Fe-S) centers, to quinones in the respiratory and/or the photosynthetic chain. The immediate electron acceptor for the enzyme in this species is believed to be plastoquinone. Couples the redox reaction to proton translocation, and thus conserves the redox energy in a proton gradient. Cyanobacterial NDH-1 also plays a role in inorganic carbon-concentration. In Synechococcus sp. (strain JA-3-3Ab) (Cyanobacteria bacterium Yellowstone A-Prime), this protein is NAD(P)H-quinone oxidoreductase subunit H.